An 87-amino-acid chain; its full sequence is Acyl-CoA-binding protein (87 aa).

The residue at position 2 (serine 2) is an N-acetylserine. Residues 2–87 enclose the ACB domain; it reads SQAEFEKAAE…VEELKQKYGI (86 aa). Lysine 8 carries the N6-acetyllysine; alternate modification. Lysine 8 carries the N6-succinyllysine; alternate modification. Residue lysine 14 participates in an acyl-CoA binding. Lysine 17 bears the N6-succinyllysine mark. Lysine 19 carries the N6-acetyllysine modification. At tyrosine 29 the chain carries Phosphotyrosine. An acyl-CoA is bound by residues 29-33, lysine 51, lysine 55, and tyrosine 74; that span reads YSHYK. Lysine 51 carries the N6-acetyllysine modification. At lysine 55 the chain carries N6-acetyllysine; alternate. Lysine 55 is subject to N6-succinyllysine; alternate. Lysine 55 bears the N6-(2-hydroxyisobutyryl)lysine; alternate mark. Lysine 55 is subject to N6-malonyllysine; alternate. Residue lysine 77 is modified to N6-acetyllysine; alternate. Lysine 77 carries the post-translational modification N6-succinyllysine; alternate.

Belongs to the ACBP family. Monomer.

The protein localises to the endoplasmic reticulum. Its subcellular location is the golgi apparatus. Functionally, binds medium- and long-chain acyl-CoA esters with very high affinity and may function as an intracellular carrier of acyl-CoA esters. It is also able to displace diazepam from the benzodiazepine (BZD) recognition site located on the GABA type A receptor. It is therefore possible that this protein also acts as a neuropeptide to modulate the action of the GABA receptor. This chain is Acyl-CoA-binding protein (DBI), found in Oryctolagus cuniculus (Rabbit).